A 748-amino-acid chain; its full sequence is Chondroadherin-like protein (748 aa).

Positions 1–29 are cleaved as a signal peptide; sequence MERPQSSIWVFMLLLFMVLLQSPAWHVAA. The 32-residue stretch at 30–61 folds into the LRRNT 1 domain; the sequence is QRCPQTCVCDNSRRHVTCRHQNLTEVPNTIPE. An N-linked (GlcNAc...) asparagine glycan is attached at asparagine 51. 9 LRR repeats span residues 85–107, 108–131, 132–155, 156–179, 181–203, 204–227, 229–252, 253–275, and 276–299; these read PHLT…AFRG, LGRL…ALDG, LGSL…TFGA, LGSL…AFQG, LRTR…ALAG, LPAL…ALSQ, RSLA…GLAL, PGLR…AFAH, and CPRL…QVPG. One can recognise an LRRCT 1 domain in the interval 309-357; that stretch reads NPLWCACHARPLLEWLVRARVRSDGACRGPRRLRGEALDTLRPSDLRCP. The tract at residues 352–389 is disordered; that stretch reads SDLRCPGDAAAGDGDGDEDEDRPAGPRAPPLRSPHGEA. Residues 394 to 428 form the LRRNT 2 domain; that stretch reads PCPPACACVAETRHSTCDGRGLQAVPRGFPNDTQL. Cysteine 395 and cysteine 410 are disulfide-bonded. LRR repeat units follow at residues 423 to 446, 448 to 470, 471 to 494, 496 to 518, 519 to 542, 544 to 566, 567 to 590, 591 to 614, 616 to 639, and 641 to 665; these read PNDT…AFPG, RHLV…ALAG, LDRL…ALEG, PNLG…ALRA, LPTL…DLAG, RALR…ALGP, AREL…ALEG, LPAL…AFQP, GRSL…AFSG, and GKGL…GLSG. An N-linked (GlcNAc...) asparagine glycan is attached at asparagine 625. Residues 674–722 enclose the LRRCT 2 domain; the sequence is NPFHCDCQLLPLHRWLTGLNLRVGATCATPPSVRGQKVKVAAPVFEACP. Disulfide bonds link cysteine 678–cysteine 721 and cysteine 680–cysteine 700. The interval 728 to 748 is disordered; that stretch reads KAKRTPTSRGSARRTPSLSRH. Over residues 734-748 the composition is skewed to polar residues; sequence TSRGSARRTPSLSRH.

It belongs to the small leucine-rich proteoglycan (SLRP) family. SLRP class IV subfamily. In terms of assembly, associates with collagen and binds to collagen fibrils. Expressed in cartilage, including articular knee cartilage, where it localizes to the extracellular space in the area immediately surrounding the chondrocytes, not detected in any other tissues (at protein level).

Its subcellular location is the secreted. It is found in the extracellular space. The protein localises to the extracellular matrix. Its function is as follows. Potential negative modulator of chondrocyte differentiation. Inhibits collagen fibrillogenesis in vitro. May influence chondrocyte's differentiation by acting on its cellular collagenous microenvironment. The polypeptide is Chondroadherin-like protein (Chadl) (Mus musculus (Mouse)).